We begin with the raw amino-acid sequence, 278 residues long: GTPase Era (278 aa).

The region spanning 7 to 168 (YCGYIAIVGK…ENLIYPYLPN (162 aa)) is the Era-type G domain. The interval 15-22 (GKPNVGKS) is G1. A GTP-binding site is contributed by 15–22 (GKPNVGKS). Residues 41-45 (NTTQK) are G2. The tract at residues 62–65 (DTPG) is G3. GTP is bound by residues 62–66 (DTPGI) and 117–120 (NKID). A G4 region spans residues 117 to 120 (NKID). The tract at residues 147–149 (ISA) is G5. The region spanning 199–276 (LRDELPSIIT…YLIIWVKVKI (78 aa)) is the KH type-2 domain.

Belongs to the TRAFAC class TrmE-Era-EngA-EngB-Septin-like GTPase superfamily. Era GTPase family. Monomer.

The protein localises to the cytoplasm. Its subcellular location is the cell membrane. Functionally, an essential GTPase that binds both GDP and GTP, with rapid nucleotide exchange. Plays a role in 16S rRNA processing and 30S ribosomal subunit biogenesis and possibly also in cell cycle regulation and energy metabolism. This chain is GTPase Era, found in Buchnera aphidicola subsp. Schizaphis graminum (strain Sg).